Here is a 351-residue protein sequence, read N- to C-terminus: uncharacterized protein (351 aa).

An N-terminal signal peptide occupies residues 1 to 27 (MKNKKRVLIASSLSCAILLLSAATTQA). The tract at residues 28-71 (NSAHKDSQDQNKKEHVDKSQQKDKRNVTNKDKNSTVPDDIGKNG) is disordered. Residues 30-60 (AHKDSQDQNKKEHVDKSQQKDKRNVTNKDKN) are compositionally biased toward basic and acidic residues.

It belongs to the aerolysin family.

This is an uncharacterized protein from Staphylococcus aureus (strain N315).